The primary structure comprises 266 residues: Small ribosomal subunit protein eS1 (266 aa).

Residues 233-266 (GEGGGSSAAKPSGDDTGAKVDRADGYEPPIQETV) form a disordered region. Over residues 244-257 (SGDDTGAKVDRADG) the composition is skewed to basic and acidic residues.

This sequence belongs to the eukaryotic ribosomal protein eS1 family. As to quaternary structure, component of the small ribosomal subunit. Mature ribosomes consist of a small (40S) and a large (60S) subunit. The 40S subunit contains about 33 different proteins and 1 molecule of RNA (18S). The 60S subunit contains about 49 different proteins and 3 molecules of RNA (28S, 5.8S and 5S). Part of the small subunit (SSU) processome, composed of more than 70 proteins and the RNA chaperone small nucleolar RNA (snoRNA) U3.

The protein localises to the cytoplasm. It is found in the nucleus. It localises to the nucleolus. Component of the small ribosomal subunit. The ribosome is a large ribonucleoprotein complex responsible for the synthesis of proteins in the cell. Part of the small subunit (SSU) processome, first precursor of the small eukaryotic ribosomal subunit. During the assembly of the SSU processome in the nucleolus, many ribosome biogenesis factors, an RNA chaperone and ribosomal proteins associate with the nascent pre-rRNA and work in concert to generate RNA folding, modifications, rearrangements and cleavage as well as targeted degradation of pre-ribosomal RNA by the RNA exosome. May play a role during erythropoiesis. This Salmo salar (Atlantic salmon) protein is Small ribosomal subunit protein eS1 (rps3a).